The chain runs to 436 residues: 3-ketoacyl-CoA thiolase (436 aa).

Residue Cys99 is the Acyl-thioester intermediate of the active site. Residues His392 and Cys422 each act as proton acceptor in the active site.

This sequence belongs to the thiolase-like superfamily. Thiolase family. In terms of assembly, heterotetramer of two alpha chains (FadJ) and two beta chains (FadI).

It is found in the cytoplasm. The catalysed reaction is an acyl-CoA + acetyl-CoA = a 3-oxoacyl-CoA + CoA. It participates in lipid metabolism; fatty acid beta-oxidation. Functionally, catalyzes the final step of fatty acid oxidation in which acetyl-CoA is released and the CoA ester of a fatty acid two carbons shorter is formed. This Shewanella woodyi (strain ATCC 51908 / MS32) protein is 3-ketoacyl-CoA thiolase.